The chain runs to 411 residues: SH3 and cysteine-rich domain-containing protein 2 (411 aa).

A disordered region spans residues M1–T29. The segment covering P19–T29 has biased composition (polar residues). At S48 the chain carries Phosphoserine. Residues T64–P95 form a disordered region. The span at P70 to T82 shows a compositional bias: pro residues. The Phorbol-ester/DAG-type zinc finger occupies L110–C161. Disordered regions lie at residues S174–P203 and R219–R288. The segment covering R219–S232 has biased composition (low complexity). SH3 domains are found at residues G292 to P351 and N354 to I411.

Interacts (via SH3 domains) with CACNA1S. Interacts (via SH3 domains) with CACNA1C. Has much lower affinity for CACNA1C than for CACNA1S.

The protein resides in the cytoplasm. It is found in the cytosol. The protein localises to the cell membrane. It localises to the sarcolemma. Its function is as follows. Plays a redundant role in promoting the expression of calcium channel CACNA1S at the cell membrane, and thereby contributes to increased channel activity. Slows down the inactivation rate of the calcium channel CACNA1C. The protein is SH3 and cysteine-rich domain-containing protein 2 (STAC2) of Homo sapiens (Human).